The sequence spans 89 residues: Translation initiation factor IF-1, chloroplastic (89 aa).

One can recognise an S1-like domain in the interval 1–73 (MKEKEAKWVV…TKGRIIYRLP (73 aa)).

Belongs to the IF-1 family. As to quaternary structure, component of the 30S ribosomal translation pre-initiation complex which assembles on the 30S ribosome in the order IF-2 and IF-3, IF-1 and N-formylmethionyl-tRNA(fMet); mRNA recruitment can occur at any time during PIC assembly.

It is found in the plastid. Its subcellular location is the chloroplast. In terms of biological role, one of the essential components for the initiation of protein synthesis. Stabilizes the binding of IF-2 and IF-3 on the 30S subunit to which N-formylmethionyl-tRNA(fMet) subsequently binds. Helps modulate mRNA selection, yielding the 30S pre-initiation complex (PIC). Upon addition of the 50S ribosomal subunit IF-1, IF-2 and IF-3 are released leaving the mature 70S translation initiation complex. The chain is Translation initiation factor IF-1, chloroplastic from Jasminum nudiflorum (Winter jasmine).